Here is a 379-residue protein sequence, read N- to C-terminus: Muconate cycloisomerase 1-1 (379 aa).

K169 is an active-site residue. Mn(2+) is bound by residues D198, E224, and D247.

It belongs to the mandelate racemase/muconate lactonizing enzyme family. Homooctamer. Mn(2+) is required as a cofactor.

The enzyme catalyses (S)-muconolactone = cis,cis-muconate + H(+). It functions in the pathway aromatic compound metabolism; beta-ketoadipate pathway; 5-oxo-4,5-dihydro-2-furylacetate from catechol: step 2/3. Functionally, catalyzes a syn cycloisomerization. This is Muconate cycloisomerase 1-1 (catB1) from Acinetobacter lwoffii.